The following is a 360-amino-acid chain: MLMLLTFFAEHMTPLNVFRYITFRTGGAMITSALIVFLFGPSIINSLRVRQGKGQPIRADGPQTHFKKAGTPTMGGLMIMTGILVSCLLWANLASVYVWVVLLVTVGFGAIGFYDDYLKVTKQSDKGFSGKARLGIEFLIAAVAAFVIMRAGQEPFSSSLTFPFAKQFVVNLSWFFIPFAAFVMVGAGNAVNLTDGLDGLAIVPVMVAAASFGFIAYLSGNAIFADYLQIHFVPGTGELAVVLGAVIGAGLGFLWFNAPPAAIFMGDTGSLALGGMLGTVAVATKHEIVLAIIGGLFVVEALSVIIQVGSFKLTGKRVFLMAPIHHHFEKKGWTESQVVIRFWIVAIILAMIGLSTLKLR.

Helical transmembrane passes span 27–47 (GAMI…INSL), 71–91 (TPTM…LLWA), 93–113 (LASV…AIGF), 128–148 (FSGK…AFVI), 168–188 (FVVN…VGAG), 199–219 (GLAI…AYLS), 239–259 (LAVV…FNAP), 262–282 (AIFM…TVAV), 288–308 (IVLA…IIQV), and 337–357 (QVVI…LSTL).

This sequence belongs to the glycosyltransferase 4 family. MraY subfamily. The cofactor is Mg(2+).

The protein resides in the cell inner membrane. The enzyme catalyses UDP-N-acetyl-alpha-D-muramoyl-L-alanyl-gamma-D-glutamyl-meso-2,6-diaminopimeloyl-D-alanyl-D-alanine + di-trans,octa-cis-undecaprenyl phosphate = di-trans,octa-cis-undecaprenyl diphospho-N-acetyl-alpha-D-muramoyl-L-alanyl-D-glutamyl-meso-2,6-diaminopimeloyl-D-alanyl-D-alanine + UMP. The protein operates within cell wall biogenesis; peptidoglycan biosynthesis. Catalyzes the initial step of the lipid cycle reactions in the biosynthesis of the cell wall peptidoglycan: transfers peptidoglycan precursor phospho-MurNAc-pentapeptide from UDP-MurNAc-pentapeptide onto the lipid carrier undecaprenyl phosphate, yielding undecaprenyl-pyrophosphoryl-MurNAc-pentapeptide, known as lipid I. The sequence is that of Phospho-N-acetylmuramoyl-pentapeptide-transferase from Brucella anthropi (strain ATCC 49188 / DSM 6882 / CCUG 24695 / JCM 21032 / LMG 3331 / NBRC 15819 / NCTC 12168 / Alc 37) (Ochrobactrum anthropi).